We begin with the raw amino-acid sequence, 279 residues long: Shikimate dehydrogenase (NADP(+)) (279 aa).

Shikimate-binding positions include 20 to 22 and Thr67; that span reads SRS. Lys71 serves as the catalytic Proton acceptor. Asp83 lines the NADP(+) pocket. Shikimate contacts are provided by Asn92 and Asp108. NADP(+)-binding positions include 134 to 138 and Leu223; that span reads GAGGA. Residue Tyr225 coordinates shikimate. Gly246 lines the NADP(+) pocket.

This sequence belongs to the shikimate dehydrogenase family. Homodimer.

It catalyses the reaction shikimate + NADP(+) = 3-dehydroshikimate + NADPH + H(+). It participates in metabolic intermediate biosynthesis; chorismate biosynthesis; chorismate from D-erythrose 4-phosphate and phosphoenolpyruvate: step 4/7. Functionally, involved in the biosynthesis of the chorismate, which leads to the biosynthesis of aromatic amino acids. Catalyzes the reversible NADPH linked reduction of 3-dehydroshikimate (DHSA) to yield shikimate (SA). The chain is Shikimate dehydrogenase (NADP(+)) from Cereibacter sphaeroides (strain ATCC 17023 / DSM 158 / JCM 6121 / CCUG 31486 / LMG 2827 / NBRC 12203 / NCIMB 8253 / ATH 2.4.1.) (Rhodobacter sphaeroides).